The sequence spans 435 residues: MTQKVNVVGAGLAGSEAAYQLAQRGIKVNLIEMRPVKQTPAHHTDKFAELVCSNSLRGNALTNAVGVLKEEMRHLDSLIITSADKARVPAGGALAVDRHDFAGYITDTLRNHPNITVLNEEVNHIPEGYTIIATGPLTTEHLAQEIVDITGKDQLYFYDAAAPIIEKDSINMDKVYLKSRYDKGEAAYLNCPMTEEEFNRFYDAVLEAEVAPVNEFEKEKYFEGCMPFEVMAERGRKTLLFGPMKPVGLEDPKTGKRPYAVVQLRQDDAAGTLYNIVGFQTHLKWGAQKEVIRLIPGLENVDIVRYGVMHRNTFINSPDVLNEKYELKGHDNLYFAGQMTGVEGYVESAASGLVAGINLAHKILDKGEVIFPRETMIGSMAYYISHAKNEKNFQPMNANFGLLPSLEKRIKDKKERYETQAKRALEYLDNYKQTL.

9–14 (GAGLAG) lines the FAD pocket.

The protein belongs to the MnmG family. TrmFO subfamily. The cofactor is FAD.

The protein localises to the cytoplasm. The catalysed reaction is uridine(54) in tRNA + (6R)-5,10-methylene-5,6,7,8-tetrahydrofolate + NADH + H(+) = 5-methyluridine(54) in tRNA + (6S)-5,6,7,8-tetrahydrofolate + NAD(+). The enzyme catalyses uridine(54) in tRNA + (6R)-5,10-methylene-5,6,7,8-tetrahydrofolate + NADPH + H(+) = 5-methyluridine(54) in tRNA + (6S)-5,6,7,8-tetrahydrofolate + NADP(+). In terms of biological role, catalyzes the folate-dependent formation of 5-methyl-uridine at position 54 (M-5-U54) in all tRNAs. The polypeptide is Methylenetetrahydrofolate--tRNA-(uracil-5-)-methyltransferase TrmFO (Staphylococcus epidermidis (strain ATCC 35984 / DSM 28319 / BCRC 17069 / CCUG 31568 / BM 3577 / RP62A)).